We begin with the raw amino-acid sequence, 295 residues long: UDP-N-acetylenolpyruvoylglucosamine reductase (295 aa).

One can recognise an FAD-binding PCMH-type domain in the interval 24 to 188; the sequence is KVGGNAEIFF…LKAVFKVNKG (165 aa). Arg168 is an active-site residue. Ser217 acts as the Proton donor in catalysis. Residue Glu287 is part of the active site.

The protein belongs to the MurB family. It depends on FAD as a cofactor.

It localises to the cytoplasm. It catalyses the reaction UDP-N-acetyl-alpha-D-muramate + NADP(+) = UDP-N-acetyl-3-O-(1-carboxyvinyl)-alpha-D-glucosamine + NADPH + H(+). Its pathway is cell wall biogenesis; peptidoglycan biosynthesis. Functionally, cell wall formation. The polypeptide is UDP-N-acetylenolpyruvoylglucosamine reductase (Rickettsia felis (strain ATCC VR-1525 / URRWXCal2) (Rickettsia azadi)).